Here is a 142-residue protein sequence, read N- to C-terminus: Putative tyrosine phosphatase 123R (142 aa).

A Tyrosine-protein phosphatase domain is found at E2–S137. The Phosphocysteine intermediate role is filled by C81.

This sequence belongs to the protein-tyrosine phosphatase family.

This chain is Putative tyrosine phosphatase 123R, found in Invertebrate iridescent virus 6 (IIV-6).